A 192-amino-acid polypeptide reads, in one-letter code: Pupal cuticle protein (192 aa).

Positions 1–15 (MHLLMSLFGVLAVMQ) are cleaved as a signal peptide. One can recognise a Chitin-binding type R&amp;R domain in the interval 45-106 (DGNYRYAYET…PVGDHIPKVP (62 aa)). Residues 149 to 163 (QDQTTPRSRPSSTPK) are compositionally biased toward polar residues. The tract at residues 149–192 (QDQTTPRSRPSSTPKTIYLTHPPTLSDAPTRRPLRQRQNDSRRR) is disordered.

Its function is as follows. Component of the cuticle of the pupa of fruit fly. This chain is Pupal cuticle protein (Pcp), found in Drosophila pseudoobscura pseudoobscura (Fruit fly).